The following is a 675-amino-acid chain: Potassium-transporting ATPase ATP-binding subunit 2 (675 aa).

The next 4 helical transmembrane spans lie at 34-54 (IMFV…FPDI), 65-85 (LITI…SEAF), 216-236 (IALF…IVTL), and 245-265 (LILP…TTIG). D304 serves as the catalytic 4-aspartylphosphate intermediate. Residues D341, E345, 372–379 (FTAETRMS), and K390 contribute to the ATP site. D513 and D517 together coordinate Mg(2+). Transmembrane regions (helical) follow at residues 569–591 (ALTT…ALMM), 611–631 (AIIS…PIAM), and 644–664 (IFIN…FLGI).

This sequence belongs to the cation transport ATPase (P-type) (TC 3.A.3) family. Type IA subfamily. The system is composed of three essential subunits: KdpA, KdpB and KdpC.

The protein resides in the cell membrane. The enzyme catalyses K(+)(out) + ATP + H2O = K(+)(in) + ADP + phosphate + H(+). Its function is as follows. Part of the high-affinity ATP-driven potassium transport (or Kdp) system, which catalyzes the hydrolysis of ATP coupled with the electrogenic transport of potassium into the cytoplasm. This subunit is responsible for energy coupling to the transport system and for the release of the potassium ions to the cytoplasm. The chain is Potassium-transporting ATPase ATP-binding subunit 2 from Staphylococcus aureus (strain MRSA252).